The following is a 619-amino-acid chain: Very-long-chain aldehyde decarbonylase GL1-1 (619 aa).

The next 5 helical transmembrane spans lie at 44 to 64, 93 to 113, 123 to 143, 190 to 210, and 322 to 342; these read LLLL…WSSF, DNFL…FPSL, GLAV…YAAH, AAAC…VLGF, and PFLL…WAWS. The Fatty acid hydroxylase domain maps to 129-269; it reads LLHVAATEPL…MPLFDLIGGT (141 aa).

Belongs to the sterol desaturase family. As to quaternary structure, homodimer.

The protein resides in the endoplasmic reticulum membrane. It carries out the reaction a long-chain fatty aldehyde + 2 NADPH + O2 + H(+) = a long-chain alkane + formate + 2 NADP(+) + H2O. Its function is as follows. Aldehyde decarbonylase involved in the conversion of aldehydes to alkanes. Core component of a very-long-chain alkane synthesis complex. The sequence is that of Very-long-chain aldehyde decarbonylase GL1-1 from Oryza sativa subsp. indica (Rice).